A 29-amino-acid polypeptide reads, in one-letter code: Vodo peptide N (29 aa).

The cyclopeptide (Gly-Asn) cross-link spans glycine 1 to asparagine 29. Cystine bridges form between cysteine 5/cysteine 19, cysteine 9/cysteine 21, and cysteine 14/cysteine 26.

In terms of processing, this is a cyclic peptide.

Functionally, probably participates in a plant defense mechanism. The sequence is that of Vodo peptide N from Viola odorata (Sweet violet).